The primary structure comprises 632 residues: MEIRERDGLARIARFDTPHGTIETPTVLPVINPNIMDITPEEMKKYGVHGVITNSYIILRNDRLREEAEKYGVHSLIGYDGPVMTDSGTFQSYVYGSVEFNNRQVVEFQKTIGSDILTILDIFTTPSSSRQEVENAITETYRRMLEVNDAGGMIAGPIQGGIYPDLRKRSAELMNSTNASYLPIGGVVPLLESYEYDKLVDIILNSKLNVSFGKPIHLFGGGHPMFFAFAVYLGVDLFDSASYVKYAKDDRLIYPDGTRDLARIIEIPEWSPLFDKYTVKELKELPKEQRSVELSRHNLKAIFMEISEIRERIYEESMDQYLAQKAKSHPSLLKAYVKVMQYSKMLEKYQDLFKKAAYFFYDSFSTKNTYVARLEKFTSKYLTSKKKETYVFSRKDWLPGYTNLNFVRDVYERTECNALIPWSGIMVPAELENTYPIEQTVSSGLEPDPDVSAISESISPFDIRVYKGESVDSDKIRSFDLEKIRTIADYQFGYGIGKDFFKDDVRIFKSKTGRIRGVFDKGNKLIATLRNDGFFTLTFHGATLLYNVSKSPNLRVFVKNESAEYNAKGYSVFFKFILDADPDIIAKNETLVVNENGELVAVGKATVSGKELREYSDGIAVKIHEGRDQSAK.

The Nucleophile role is filled by aspartate 86. The substrate site is built by aspartate 121 and glycine 186. A PUA domain is found at asparagine 553–aspartate 628.

Belongs to the archaeosine tRNA-ribosyltransferase family. Zn(2+) serves as cofactor.

It catalyses the reaction guanosine(15) in tRNA + 7-cyano-7-deazaguanine = 7-cyano-7-carbaguanosine(15) in tRNA + guanine. It participates in tRNA modification; archaeosine-tRNA biosynthesis. Functionally, exchanges the guanine residue with 7-cyano-7-deazaguanine (preQ0) at position 15 in the dihydrouridine loop (D-loop) of archaeal tRNAs. The protein is tRNA-guanine(15) transglycosylase of Thermoplasma volcanium (strain ATCC 51530 / DSM 4299 / JCM 9571 / NBRC 15438 / GSS1).